A 320-amino-acid polypeptide reads, in one-letter code: MRVLSGIQPTGRPHWGNYFGAIRQYIDLQEDNEGFYFIADLHALTTVREPEVLRENVMNAALDLLALGLDPSKANLFVQSDIPEVTELTWLLMTGTPMGLLERCHAFKEKKAKGLTADAGLFTYPVLMAADILAYDSQIVPVGVDQVQHIEVCRDLAGSFHHAFGETFVLPKAKTLDVGAKVPGTDGQKMSKSYNNTLPLFGEVKKIRKQIMRIVTDSRPMEDPKDPTDDHLFQLYQLFAGPAEVETMAAKYRAGGFGYGEIKKAVAEVSEEYFAPARAKREELESDLDTVRDILAEGAKRAREVAASVVDRARRNCGLR.

ATP is bound by residues 8 to 10 (QPT) and 16 to 17 (GN). Positions 9 to 17 (PTGRPHWGN) match the 'HIGH' region motif. Asp131 contacts L-tryptophan. ATP contacts are provided by residues 143-145 (GVD), Val182, and 189-193 (KMSKS). Residues 189 to 193 (KMSKS) carry the 'KMSKS' region motif.

This sequence belongs to the class-I aminoacyl-tRNA synthetase family. Homodimer.

It is found in the cytoplasm. It catalyses the reaction tRNA(Trp) + L-tryptophan + ATP = L-tryptophyl-tRNA(Trp) + AMP + diphosphate + H(+). Its function is as follows. Catalyzes the attachment of tryptophan to tRNA(Trp). The chain is Tryptophan--tRNA ligase from Rhodopirellula baltica (strain DSM 10527 / NCIMB 13988 / SH1).